We begin with the raw amino-acid sequence, 205 residues long: Ribonuclease HII (205 aa).

One can recognise an RNase H type-2 domain in the interval 14–205 (SLISGIDEAG…SFRLKQLGEK (192 aa)). The a divalent metal cation site is built by Asp20, Glu21, and Asp117.

It belongs to the RNase HII family. The cofactor is Mn(2+). Mg(2+) serves as cofactor.

The protein localises to the cytoplasm. It catalyses the reaction Endonucleolytic cleavage to 5'-phosphomonoester.. In terms of biological role, endonuclease that specifically degrades the RNA of RNA-DNA hybrids. The polypeptide is Ribonuclease HII (Chlorobium phaeobacteroides (strain DSM 266 / SMG 266 / 2430)).